The following is a 142-amino-acid chain: Putative 2'-deoxynucleoside 5'-phosphate N-hydrolase 1 (142 aa).

Substrate is bound by residues 4–10, Tyr19, His36, Glu82, and 106–108; these read FFSGSIR and SAM.

This sequence belongs to the 2'-deoxynucleoside 5'-phosphate N-hydrolase 1 family. In terms of assembly, monomer and homodimer.

It carries out the reaction a pyrimidine 2'-deoxyribonucleoside 5'-phosphate + H2O = a pyrimidine nucleobase + 2-deoxy-D-ribose 5-phosphate. It catalyses the reaction a purine 2'-deoxyribonucleoside 5'-phosphate + H2O = a purine nucleobase + 2-deoxy-D-ribose 5-phosphate. Catalyzes the cleavage of the N-glycosidic bond of deoxyribonucleoside 5'-monophosphates to yield deoxyribose 5-phosphate and a purine or pyrimidine base. In Syntrophotalea carbinolica (strain DSM 2380 / NBRC 103641 / GraBd1) (Pelobacter carbinolicus), this protein is Putative 2'-deoxynucleoside 5'-phosphate N-hydrolase 1.